A 430-amino-acid chain; its full sequence is Serine--tRNA ligase (430 aa).

Residue 237–239 (TAE) participates in L-serine binding. 268-270 (RSE) serves as a coordination point for ATP. E291 serves as a coordination point for L-serine. Position 355–358 (355–358 (EISS)) interacts with ATP. S391 contacts L-serine.

The protein belongs to the class-II aminoacyl-tRNA synthetase family. Type-1 seryl-tRNA synthetase subfamily. Homodimer. The tRNA molecule binds across the dimer.

It is found in the cytoplasm. The enzyme catalyses tRNA(Ser) + L-serine + ATP = L-seryl-tRNA(Ser) + AMP + diphosphate + H(+). It carries out the reaction tRNA(Sec) + L-serine + ATP = L-seryl-tRNA(Sec) + AMP + diphosphate + H(+). It functions in the pathway aminoacyl-tRNA biosynthesis; selenocysteinyl-tRNA(Sec) biosynthesis; L-seryl-tRNA(Sec) from L-serine and tRNA(Sec): step 1/1. Functionally, catalyzes the attachment of serine to tRNA(Ser). Is also able to aminoacylate tRNA(Sec) with serine, to form the misacylated tRNA L-seryl-tRNA(Sec), which will be further converted into selenocysteinyl-tRNA(Sec). The chain is Serine--tRNA ligase from Shigella boydii serotype 18 (strain CDC 3083-94 / BS512).